We begin with the raw amino-acid sequence, 475 residues long: Secreted triacylglycerol lipase LIP5 (475 aa).

The N-terminal stretch at 1–19 (MYPCTLLMVLLCLAIMTHG) is a signal peptide. A disulfide bond links cysteine 129 and cysteine 300. Serine 213 acts as the Nucleophile in catalysis. Asparagine 246 and asparagine 312 each carry an N-linked (GlcNAc...) asparagine glycan. Aspartate 360 is an active-site residue. A glycan (N-linked (GlcNAc...) asparagine) is linked at asparagine 369. Histidine 394 is an active-site residue. N-linked (GlcNAc...) asparagine glycosylation occurs at asparagine 471.

The protein belongs to the AB hydrolase superfamily. Lipase family. Class Lip subfamily.

The catalysed reaction is a triacylglycerol + H2O = a diacylglycerol + a fatty acid + H(+). The enzyme catalyses a monoacylglycerol + H2O = glycerol + a fatty acid + H(+). It catalyses the reaction a diacylglycerol + H2O = a monoacylglycerol + a fatty acid + H(+). Its function is as follows. Secreted lipase involved in Dandruff and seborrheic dermatitis (D/SD) probably via lipase-mediated breakdown of sebaceous lipids and release of irritating free fatty acids. Has triacylglycerol lipase activity and is able to hydrolyze triolein. Mostly converts monoolein to di- and triolein, while free fatty acids are only produced in low amounts. In Malassezia globosa (strain ATCC MYA-4612 / CBS 7966) (Dandruff-associated fungus), this protein is Secreted triacylglycerol lipase LIP5.